A 668-amino-acid chain; its full sequence is Threonine--tRNA ligase (668 aa).

One can recognise a TGS domain in the interval 1–64 (MSQSVSLTFP…TDGKIEIITR (64 aa)). A catalytic region spans residues 245–553 (DHRKLGREMD…LIENFAGHMP (309 aa)). C347, H398, and H530 together coordinate Zn(2+).

Belongs to the class-II aminoacyl-tRNA synthetase family. Homodimer. Zn(2+) serves as cofactor.

It localises to the cytoplasm. The catalysed reaction is tRNA(Thr) + L-threonine + ATP = L-threonyl-tRNA(Thr) + AMP + diphosphate + H(+). Catalyzes the attachment of threonine to tRNA(Thr) in a two-step reaction: L-threonine is first activated by ATP to form Thr-AMP and then transferred to the acceptor end of tRNA(Thr). Also edits incorrectly charged L-seryl-tRNA(Thr). This Rhizobium etli (strain ATCC 51251 / DSM 11541 / JCM 21823 / NBRC 15573 / CFN 42) protein is Threonine--tRNA ligase.